The sequence spans 1016 residues: Mediator of RNA polymerase II transcription subunit 5 (1016 aa).

It belongs to the Mediator complex subunit 5 family. Component of the Mediator complex.

It localises to the nucleus. Its function is as follows. Component of the Mediator complex, a coactivator involved in the regulated transcription of nearly all RNA polymerase II-dependent genes. Mediator functions as a bridge to convey information from gene-specific regulatory proteins to the basal RNA polymerase II transcription machinery. Mediator is recruited to promoters by direct interactions with regulatory proteins and serves as a scaffold for the assembly of a functional preinitiation complex with RNA polymerase II and the general transcription factors. This chain is Mediator of RNA polymerase II transcription subunit 5 (nut1), found in Aspergillus terreus (strain NIH 2624 / FGSC A1156).